A 691-amino-acid polypeptide reads, in one-letter code: MLTTTFARKREESVPLRKGIQRALLGLSCLVLSTTSFAAGGEWRTHGYDDAGTRYSPLAQITPDNAKELGLVWSYDLESSRGVEATPIVVDGVMYVTAPWSVVHALDVRSGKRLWTYDPEVPREKGKNACCDVVNRGVAVHEGKVFVGSLDGRLVAIDARTGKRVWERNTLIDDDKPYTITGAPRVIKGKVVIGNGGAEFGVRGYITAYDPTAASRPGVVPGPGDPSLPFEDASMEAAAKTWDPAGQVLGSGRRRHGVELDGLYRKAGFCCTSAPATPSPWSHRKRSPAGGDNLYTASIVALRPDTGEYVWHYQQTPADNWDYTSTQDLILADIELGGKPRKVILHAPKNGFFFVIDRTDGKFISAQNFVPVNWATGYDENGRPIENPEGAWPGHLSMRFPAPSARTNWHSMSYSPQTGLAYFPAQNIPLVLQEDKNWSYNQAQPGQAMAGIGWNLGMLVNPRPPASQPFGRLIAWDPVQQKEVWRKEHVSPWNGGTLVTAGNVVFQGTADARLLAFDARDGKELWSAPMGTGVIAAPVTYEVDGKQYVSIAVGWGGVYGNFTRASERRTPGTVYTFALGGKAEMPAFTEYQLNNLVSGVDYNPDDVAEGTGLYVTNCVFCHGVPGVDKGGGIPNLGYSTAETIAHLDQFVFKGPFMPRGMPDFTGKLTPEQVEKIKAFILGTADAVRPKK.

The first 38 residues, 1-38 (MLTTTFARKREESVPLRKGIQRALLGLSCLVLSTTSFA), serve as a signal peptide directing secretion. E84 is a pyrroloquinoline quinone binding site. C130 and C131 are joined by a disulfide. Pyrroloquinoline quinone is bound by residues R136, T181, and 197–198 (GA). Ca(2+) contacts are provided by E199 and D322. D322 (proton acceptor) is an active-site residue. Pyrroloquinoline quinone is bound by residues K349, 408–409 (NW), and V558. The Cytochrome c domain occupies 605–684 (DDVAEGTGLY…KIKAFILGTA (80 aa)). Heme c is bound by residues C618, C621, H622, and M661.

Belongs to the bacterial PQQ dehydrogenase family. In terms of assembly, monomer. The cofactor is pyrroloquinoline quinone. Ca(2+) is required as a cofactor. It depends on heme c as a cofactor.

The protein resides in the periplasm. It carries out the reaction butan-1-ol + 2 Fe(III)-[cytochrome c] = butanal + 2 Fe(II)-[cytochrome c] + 2 H(+). Dehydrogenase activity is increased by ammonium ions. In terms of biological role, involved in the metabolism of butane. Could be important in the detoxification of 1-butanol. Catalyzes the oxidation of 1-butanol to butyraldehyde. Also able to use 1-propanol, 2-pentanol, propionaldehyde and butyraldehyde as substrates. The polypeptide is 1-butanol dehydrogenase (cytochrome c) (Thauera butanivorans (strain ATCC 43655 / DSM 2080 / JCM 20651 / CCUG 51053 / NBRC 103042 / IAM 12574 / Bu B1211) (Pseudomonas butanovora)).